A 127-amino-acid chain; its full sequence is Ribonuclease P protein component 1 (127 aa).

Belongs to the eukaryotic/archaeal RNase P protein component 1 family. Consists of a catalytic RNA component and at least 4-5 protein subunits.

The protein resides in the cytoplasm. It carries out the reaction Endonucleolytic cleavage of RNA, removing 5'-extranucleotides from tRNA precursor.. Functionally, part of ribonuclease P, a protein complex that generates mature tRNA molecules by cleaving their 5'-ends. The protein is Ribonuclease P protein component 1 of Pyrococcus abyssi (strain GE5 / Orsay).